Consider the following 282-residue polypeptide: Complement component 1 Q subcomponent-binding protein, mitochondrial (282 aa).

The N-terminal 73 residues, 1-73 (MLPLLRCVPR…PCACGCGCGS (73 aa)), are a transit peptide targeting the mitochondrion. Residues 76 to 93 (TDGDKAFVDFLSDEIKEE) are C1q binding. Serine 87 bears the Phosphoserine mark. Residue lysine 91 is modified to N6-acetyllysine. The interval 138–164 (SIPPTFDGEEEPSQGQKVEEQEPELTS) is disordered. The segment at 168–213 (FVVEVIKNDDGKKALVLDCHYPEDEVGQEDEAESDIFSIREVSFQS) is interaction with MAVS. Tyrosine 188 is modified (phosphotyrosine). Phosphoserine occurs at positions 201 and 205. Threonine 214 is modified (phosphothreonine).

Belongs to the MAM33 family. As to quaternary structure, homotrimer; three monomers form a donut-shaped structure with an unusually asymmetric charge distribution on the surface. Interacts with CDK13, HRK, VTN, NFYB, ADRA1B, FOXC1, DDX21, DDX50, NCL, SRSF1, SRSF9 and CDKN2A isoform smARF. Interacts with CD93; the association may represent a cell surface C1q receptor. Interacts with KRT1; the association represents a cell surface kininogen receptor. Interacts with CD209; the interaction is indicative for a C1q:C1QBP:CD209 signaling complex. Interacts with FBL and RRP1; the respective interactions with C1QBP are competitive. Probably associates with the mitoribosome. Interacts with MAVS; the interaction occurs upon viral transfection. Interacts with PPIF. Interacts with U2AF1L4. Interacts with PLEKHN1. Interacts with VGF-derived peptide TLQP-21. Interacts with POLGARF which is produced from an alternative reading frame of the POLG gene; the interaction results in nucleolar localization of C1QBP, probably due to prevention of C1QBP maturation and redirection from mitochondria to nucleoli. Interacts with MRE11 and RAD50; forming the MRC (MRE11-RAD50-C1QBP) complex that inhibits the activity of MRE11. (Microbial infection) Interacts with Rubella virus capsid protein; the interaction occurs in mitochondria. Interacts with Rubella virus protease/methyltransferase p150. In terms of assembly, (Microbial infection) Interacts with Staphylococcus aureus protein A/spa. As to quaternary structure, (Microbial infection) Interacts with Staphylococcus aureus protein A/spa, HIV-1 Tat and HCV core protein. (Microbial infection) Interacts with HIV-1 Tat and HCV core protein. In terms of assembly, (Microbial infection) Interacts with L.monocytogenes internalin B. As to quaternary structure, (Microbial infection) Interacts with Epstein-Barr virus EBNA1. As to expression, expressed on cell surface of peripheral blood cells (at protein level); Surface expression is reported for macrophages and monocyte-derived dendritic cells.

The protein localises to the mitochondrion matrix. It is found in the nucleus. The protein resides in the nucleolus. It localises to the cell membrane. Its subcellular location is the secreted. The protein localises to the cytoplasm. Functionally, multifunctional and multicompartmental protein involved in inflammation and infection processes, ribosome biogenesis, protein synthesis in mitochondria, regulation of apoptosis, transcriptional regulation and pre-mRNA splicing. At the cell surface is thought to act as an endothelial receptor for plasma proteins of the complement and kallikrein-kinin cascades. Putative receptor for C1q; specifically binds to the globular 'heads' of C1q thus inhibiting C1; may perform the receptor function through a complex with C1qR/CD93. In complex with cytokeratin-1/KRT1 is a high affinity receptor for kininogen-1/HMWK. Can also bind other plasma proteins, such as coagulation factor XII leading to its autoactivation. May function to bind initially fluid kininogen-1 to the cell membrane. The secreted form may enhance both extrinsic and intrinsic coagulation pathways. It is postulated that the cell surface form requires docking with transmembrane proteins for downstream signaling which might be specific for a cell-type or response. By acting as C1q receptor is involved in chemotaxis of immature dendritic cells and neutrophils and is proposed to signal through CD209/DC-SIGN on immature dendritic cells, through integrin alpha-4/beta-1 during trophoblast invasion of the decidua, and through integrin beta-1 during endothelial cell adhesion and spreading. Signaling involved in inhibition of innate immune response is implicating the PI3K-AKT/PKB pathway. Required for protein synthesis in mitochondria. In mitochondrial translation may be involved in formation of functional 55S mitoribosomes; the function seems to involve its RNA-binding activity. Acts as a RNA modification reader, which specifically recognizes and binds mitochondrial RNAs modified by C5-methylcytosine (m5C) in response to stress, and promotes recruitment of the mitochondrial degradosome complex, leading to their degradation. May be involved in the nucleolar ribosome maturation process; the function may involve the exchange of FBL for RRP1 in the association with pre-ribosome particles. Involved in regulation of RNA splicing by inhibiting the RNA-binding capacity of SRSF1 and its phosphorylation. Is required for the nuclear translocation of splicing factor U2AF1L4. Involved in regulation of CDKN2A- and HRK-mediated apoptosis. Stabilizes mitochondrial CDKN2A isoform smARF. May be involved in regulation of FOXC1 transcriptional activity and NFY/CCAAT-binding factor complex-mediated transcription. May play a role in antibacterial defense as it can bind to cell surface hyaluronan and inhibit Streptococcus pneumoniae hyaluronate lyase. May be involved in modulation of the immune response; ligation by HCV core protein is resulting in suppression of interleukin-12 production in monocyte-derived dendritic cells. Involved in regulation of antiviral response by inhibiting RIGI- and IFIH1-mediated signaling pathways probably involving its association with MAVS after viral infection. Acts as a regulator of DNA repair via homologous recombination by inhibiting the activity of MRE11: interacts with unphosphorylated MRE11 and RAD50 in absence of DNA damage, preventing formation and activity of the MRN complex. Following DNA damage, dissociates from phosphorylated MRE11, allowing formation of the MRN complex. Its function is as follows. (Microbial infection) Involved in HIV-1 replication, presumably by contributing to splicing of viral RNA. In terms of biological role, (Microbial infection) In infection processes acts as an attachment site for microbial proteins, including Listeria monocytogenes internalin B (InlB) and Staphylococcus aureus protein A. (Microbial infection) Involved in replication of Rubella virus. The protein is Complement component 1 Q subcomponent-binding protein, mitochondrial (C1QBP) of Homo sapiens (Human).